Reading from the N-terminus, the 403-residue chain is Leu/Ile/Val-binding protein homolog 8 (403 aa).

The first 26 residues, 1-26 (MRLSRLLIGASLGVALSSTAFTAALA), serve as a signal peptide directing secretion.

The protein belongs to the leucine-binding protein family.

Component of an amino-acid transport system. This chain is Leu/Ile/Val-binding protein homolog 8, found in Brucella suis biovar 1 (strain 1330).